Consider the following 243-residue polypeptide: Geranylgeranylglyceryl phosphate synthase (243 aa).

Mg(2+) contacts are provided by D22 and S51. Residues Y170–G176, G201–G202, and G223–T224 contribute to the sn-glycerol 1-phosphate site.

The protein belongs to the GGGP/HepGP synthase family. Group II subfamily. The cofactor is Mg(2+).

It localises to the cytoplasm. It catalyses the reaction sn-glycerol 1-phosphate + (2E,6E,10E)-geranylgeranyl diphosphate = sn-3-O-(geranylgeranyl)glycerol 1-phosphate + diphosphate. It functions in the pathway membrane lipid metabolism; glycerophospholipid metabolism. Its function is as follows. Prenyltransferase that catalyzes the transfer of the geranylgeranyl moiety of geranylgeranyl diphosphate (GGPP) to the C3 hydroxyl of sn-glycerol-1-phosphate (G1P). This reaction is the first ether-bond-formation step in the biosynthesis of archaeal membrane lipids. In Picrophilus torridus (strain ATCC 700027 / DSM 9790 / JCM 10055 / NBRC 100828 / KAW 2/3), this protein is Geranylgeranylglyceryl phosphate synthase.